A 612-amino-acid chain; its full sequence is Dihydroxy-acid dehydratase (612 aa).

Asp-81 serves as a coordination point for Mg(2+). Cys-122 contributes to the [2Fe-2S] cluster binding site. Mg(2+) contacts are provided by Asp-123 and Lys-124. The residue at position 124 (Lys-124) is an N6-carboxylysine. Cys-195 contacts [2Fe-2S] cluster. Glu-491 is a Mg(2+) binding site. Ser-517 serves as the catalytic Proton acceptor.

The protein belongs to the IlvD/Edd family. In terms of assembly, homodimer. [2Fe-2S] cluster is required as a cofactor. It depends on Mg(2+) as a cofactor.

The catalysed reaction is (2R)-2,3-dihydroxy-3-methylbutanoate = 3-methyl-2-oxobutanoate + H2O. The enzyme catalyses (2R,3R)-2,3-dihydroxy-3-methylpentanoate = (S)-3-methyl-2-oxopentanoate + H2O. It functions in the pathway amino-acid biosynthesis; L-isoleucine biosynthesis; L-isoleucine from 2-oxobutanoate: step 3/4. It participates in amino-acid biosynthesis; L-valine biosynthesis; L-valine from pyruvate: step 3/4. Its function is as follows. Functions in the biosynthesis of branched-chain amino acids. Catalyzes the dehydration of (2R,3R)-2,3-dihydroxy-3-methylpentanoate (2,3-dihydroxy-3-methylvalerate) into 2-oxo-3-methylpentanoate (2-oxo-3-methylvalerate) and of (2R)-2,3-dihydroxy-3-methylbutanoate (2,3-dihydroxyisovalerate) into 2-oxo-3-methylbutanoate (2-oxoisovalerate), the penultimate precursor to L-isoleucine and L-valine, respectively. The protein is Dihydroxy-acid dehydratase of Rhizobium leguminosarum bv. trifolii (strain WSM2304).